A 375-amino-acid chain; its full sequence is S-(hydroxymethyl)glutathione dehydrogenase (375 aa).

Cys40 is a Zn(2+) binding site. Position 41 (His41) interacts with NAD(+). Positions 62, 63, 92, 95, 98, 106, and 170 each coordinate Zn(2+). NAD(+)-binding positions include 195-200, Asp219, 293-295, and 318-320; these read GLGGIG, IGV, and TAF.

Belongs to the zinc-containing alcohol dehydrogenase family. Class-III subfamily. As to quaternary structure, homotetramer. It depends on Zn(2+) as a cofactor.

The catalysed reaction is a primary alcohol + NAD(+) = an aldehyde + NADH + H(+). It carries out the reaction a secondary alcohol + NAD(+) = a ketone + NADH + H(+). It catalyses the reaction S-(hydroxymethyl)glutathione + NADP(+) = S-formylglutathione + NADPH + H(+). The enzyme catalyses S-(hydroxymethyl)glutathione + NAD(+) = S-formylglutathione + NADH + H(+). The catalysed reaction is S-nitrosoglutathione + NADH + H(+) = S-(hydroxysulfenamide)glutathione + NAD(+). Oxidizes long-chain alcohols and, in the presence of glutathione, is able to oxidize formaldehyde. Also acts as a S-nitroso-glutathione reductase by catalyzing the NADH-dependent reduction of S-nitrosoglutathione, thereby regulating protein S-nitrosylation. The chain is S-(hydroxymethyl)glutathione dehydrogenase (flhA) from Paracoccus denitrificans.